The primary structure comprises 289 residues: uncharacterized protein (289 aa).

Residues 2-62 (NEKKERIIKT…SACEYYIGMS (61 aa)) form the HTH tetR-type domain. The segment at residues 25–44 (TIQEIASECGISKGAFYLHF) is a DNA-binding region (H-T-H motif).

This is an uncharacterized protein from Bacillus subtilis (strain 168).